Consider the following 325-residue polypeptide: Germination protease (325 aa).

The propeptide occupies 1–7 (MYNVRTD).

The protein belongs to the peptidase A25 family. Homotetramer. Post-translationally, autoproteolytically processed. The inactive tetrameric zymogen termed p46 autoprocesses to a smaller form termed p41, which is active only during spore germination.

The catalysed reaction is Endopeptidase action with P4 Glu or Asp, P1 preferably Glu &gt; Asp, P1' hydrophobic and P2' Ala.. Functionally, initiates the rapid degradation of small, acid-soluble proteins during spore germination. The chain is Germination protease from Clostridium perfringens (strain ATCC 13124 / DSM 756 / JCM 1290 / NCIMB 6125 / NCTC 8237 / Type A).